Here is a 350-residue protein sequence, read N- to C-terminus: Thymidine kinase (350 aa).

An ATP-binding site is contributed by 15 to 22 (GAHGLGKT). The active-site Proton acceptor is Glu44. Gln88 contributes to the substrate binding site. Arg178 provides a ligand contact to ATP. Residue Arg184 coordinates substrate.

This sequence belongs to the herpesviridae thymidine kinase family. Homodimer.

It carries out the reaction thymidine + ATP = dTMP + ADP + H(+). Functionally, catalyzes the transfer of the gamma-phospho group of ATP to thymidine to generate dTMP in the salvage pathway of pyrimidine synthesis. The dTMP serves as a substrate for DNA polymerase during viral DNA replication. Allows the virus to be reactivated and to grow in non-proliferative cells lacking a high concentration of phosphorylated nucleic acid precursors. This Bos taurus (Bovine) protein is Thymidine kinase.